We begin with the raw amino-acid sequence, 201 residues long: Recombination protein RecR (201 aa).

A C4-type zinc finger spans residues 60–75 (CHACGNVDTSDPCTIC). Positions 83 to 178 (TTLVVVEDVS…TITRLAHGVP (96 aa)) constitute a Toprim domain.

Belongs to the RecR family.

In terms of biological role, may play a role in DNA repair. It seems to be involved in an RecBC-independent recombinational process of DNA repair. It may act with RecF and RecO. In Methylorubrum populi (strain ATCC BAA-705 / NCIMB 13946 / BJ001) (Methylobacterium populi), this protein is Recombination protein RecR.